A 382-amino-acid polypeptide reads, in one-letter code: Sphingosine 1-phosphate receptor 1 (382 aa).

Topologically, residues 1–46 (MGSTRIPLVKALHSPVSDYVNYDIIVRHYNYTGKLKISADKDNGIK) are extracellular. Lysine 10 bears the N6-acetyllysine mark. Asparagine 30 carries an N-linked (GlcNAc...) asparagine glycan. The chain crosses the membrane as a helical span at residues 47–68 (LISVVFILICCFIILENIFVLL). Over 69–82 (TIWKTKKFHRPMYY) the chain is Cytoplasmic. A helical membrane pass occupies residues 83 to 104 (FIGNLALSDLLAGVAYTANLLL). The Extracellular segment spans residues 105–116 (SGATTYKLTPAQ). A helical membrane pass occupies residues 117–138 (WFLREGSMFVALSASVFSLLAI). Sphing-4-enine 1-phosphate is bound at residue 120-121 (RE). The Cytoplasmic portion of the chain corresponds to 139-160 (AIERYITMLKMKLHNGSNRFRS). The helical transmembrane segment at 161–182 (FLLISACWVISLILGGLPIMGW) threads the bilayer. Topologically, residues 183–196 (NCISTLPSCSTVLP) are extracellular. A disulfide bridge links cysteine 184 with cysteine 191. A helical membrane pass occupies residues 197-224 (LYHKHYILFCTTVFTLLLLSIVILYCRI). Residues 225–257 (YSLVRTRSRRLTFRKNISKASRSSEKSLALLKT) lie on the Cytoplasmic side of the membrane. Threonine 236 bears the Phosphothreonine; by PKB/AKT1 mark. The helical transmembrane segment at 258–278 (VIIVLGVFIACWAPLFILLLL) threads the bilayer. 265–269 (FIACW) serves as a coordination point for sphing-4-enine 1-phosphate. Residues 279-289 (DVGCKVKTCDI) are Extracellular-facing. A disulfide bond links cysteine 282 and cysteine 287. Residues 290–310 (LFRTEYFLVLAVLNSGTNPII) traverse the membrane as a helical segment. Topologically, residues 311-382 (YTLSNKEMRR…MSSGNVNSSS (72 aa)) are cytoplasmic. The S-palmitoyl cysteine moiety is linked to residue cysteine 328. The disordered stretch occupies residues 349 to 382 (EFSRSKSDNSSHPQKDDGDNPETIMSSGNVNSSS). A phosphoserine mark is found at serine 351 and serine 353. Positions 351 to 366 (SRSKSDNSSHPQKDDG) are enriched in basic and acidic residues. Residues 371-382 (TIMSSGNVNSSS) are compositionally biased toward polar residues.

It belongs to the G-protein coupled receptor 1 family. In terms of assembly, interacts with GNAI1 and GNAI3. Interacts with CD69; this interaction promotes S1PR1 degradation. In terms of processing, S1P-induced endothelial cell migration requires the PKB/AKT1-mediated phosphorylation of the third intracellular loop at the Thr-236 residue. Palmitoylated by ZDHHC5. Palmitoylation is required for targeting to plasma membrane, enabling G(i) coupling.

It localises to the cell membrane. The protein resides in the endosome. The protein localises to the membrane raft. In terms of biological role, G-protein coupled receptor for the bioactive lysosphingolipid sphingosine 1-phosphate (S1P) that seems to be coupled to the G(i) subclass of heteromeric G proteins. Signaling leads to the activation of RAC1, SRC, PTK2/FAK1 and MAP kinases. Plays an important role in cell migration, probably via its role in the reorganization of the actin cytoskeleton and the formation of lamellipodia in response to stimuli that increase the activity of the sphingosine kinase SPHK1. Required for normal chemotaxis toward sphingosine 1-phosphate. Required for normal embryonic heart development and normal cardiac morphogenesis. Plays an important role in the regulation of sprouting angiogenesis and vascular maturation. Inhibits sprouting angiogenesis to prevent excessive sprouting during blood vessel development. Required for normal egress of mature T-cells from the thymus into the blood stream and into peripheral lymphoid organs. Plays a role in the migration of osteoclast precursor cells, the regulation of bone mineralization and bone homeostasis. Plays a role in responses to oxidized 1-palmitoyl-2-arachidonoyl-sn-glycero-3-phosphocholine by pulmonary endothelial cells and in the protection against ventilator-induced lung injury. The polypeptide is Sphingosine 1-phosphate receptor 1 (S1PR1) (Bos taurus (Bovine)).